A 589-amino-acid chain; its full sequence is Transmembrane 9 superfamily member 3 (589 aa).

The N-terminal stretch at 1 to 28 (MRPLPGALGVAAAAALWLLLLLLPRTRA) is a signal peptide. N-linked (GlcNAc...) asparagine glycosylation occurs at Asn174. The next 5 membrane-spanning stretches (helical) occupy residues 224 to 244 (FSIF…SMIL), 294 to 314 (LIGS…VAMI), 328 to 348 (AIFV…SLYA), 360 to 380 (FIGA…INFI), and 389 to 409 (AIPF…ILPL). Residue Asn419 is glycosylated (N-linked (GlcNAc...) asparagine). 4 helical membrane-spanning segments follow: residues 449 to 469 (IVCL…YFIF), 482 to 502 (GFMM…TIVC), 519 to 539 (FLSA…YYFF), and 551 to 571 (FYFG…GAIG).

It belongs to the nonaspanin (TM9SF) (TC 9.A.2) family.

The protein localises to the membrane. In Homo sapiens (Human), this protein is Transmembrane 9 superfamily member 3 (TM9SF3).